The following is a 187-amino-acid chain: Large ribosomal subunit protein uL5 (187 aa).

Belongs to the universal ribosomal protein uL5 family. As to quaternary structure, part of the 50S ribosomal subunit; part of the 5S rRNA/L5/L18/L25 subcomplex. Contacts the 5S rRNA and the P site tRNA. Forms a bridge to the 30S subunit in the 70S ribosome.

This is one of the proteins that bind and probably mediate the attachment of the 5S RNA into the large ribosomal subunit, where it forms part of the central protuberance. In the 70S ribosome it contacts protein S13 of the 30S subunit (bridge B1b), connecting the 2 subunits; this bridge is implicated in subunit movement. Contacts the P site tRNA; the 5S rRNA and some of its associated proteins might help stabilize positioning of ribosome-bound tRNAs. The protein is Large ribosomal subunit protein uL5 of Mycobacterium sp. (strain JLS).